A 165-amino-acid chain; its full sequence is Nucleoside-triphosphatase THEP1 (165 aa).

ATP contacts are provided by residues 7 to 14 and 93 to 100; these read GRPGVGKT and LVIIDEVG.

It belongs to the THEP1 NTPase family.

The catalysed reaction is a ribonucleoside 5'-triphosphate + H2O = a ribonucleoside 5'-diphosphate + phosphate + H(+). Its function is as follows. Has nucleotide phosphatase activity towards ATP, GTP, CTP, TTP and UTP. May hydrolyze nucleoside diphosphates with lower efficiency. This Archaeoglobus fulgidus (strain ATCC 49558 / DSM 4304 / JCM 9628 / NBRC 100126 / VC-16) protein is Nucleoside-triphosphatase THEP1.